The following is a 1437-amino-acid chain: IQ domain-containing protein N (1437 aa).

In terms of domain architecture, IQ 1 spans 84-112; the sequence is SRAATVIQASWKGYRLRQKLISQMTAAKA. 3 disordered regions span residues 332–353, 416–440, and 848–878; these read TSPT…SLSN, SQAQ…KPSP, and STGS…QNPR. A compositionally biased stretch (low complexity) spans 422 to 440; that stretch reads TVSTSSKTSPSSPTVKPSP. The segment covering 861-878 has biased composition (polar residues); sequence AQPQLHSHAPNKTMQNPR. IQ domains are found at residues 1190-1216, 1217-1239, 1240-1258, 1361-1389, and 1390-1413; these read QAVV…QWAT, IIQA…RATT, IIQA…ARQV, QHRA…SAAK, and MVQA…LGTG.

Interacts with calmodulin. Expressed in testis, in elongating spermatids (at protein level).

Functionally, essential for spermiogenesis and fertilization. May be required for manchette assembly in elongating spermatids. The chain is IQ domain-containing protein N (Iqcn) from Mus musculus (Mouse).